We begin with the raw amino-acid sequence, 205 residues long: MVEWLISDQLINYNYAVKFMEKKIQQIHNNSSDELVWLLQHPPLYTAGISATDDDVVEKLLPIYKTGRGGKYTYHGPGQRIIYLMLNLKKRNKCDIKLYIRELGSWIINVLKHFNIFGEFKEDRIGVWVNNNGVEEKIAAFGIRLRKWITYHGIALNFSPDLSHYKGIIPCGLKGYGVTSIKELGVKAPLFKLDNILKKEFYKIF.

Positions 30 to 205 (NSSDELVWLL…ILKKEFYKIF (176 aa)) constitute a BPL/LPL catalytic domain. Residues 68-75 (RGGKYTYH), 140-142 (AFG), and 153-155 (GIA) contribute to the substrate site. The Acyl-thioester intermediate role is filled by C171.

The protein belongs to the LipB family.

It localises to the cytoplasm. The catalysed reaction is octanoyl-[ACP] + L-lysyl-[protein] = N(6)-octanoyl-L-lysyl-[protein] + holo-[ACP] + H(+). Its pathway is protein modification; protein lipoylation via endogenous pathway; protein N(6)-(lipoyl)lysine from octanoyl-[acyl-carrier-protein]: step 1/2. Functionally, catalyzes the transfer of endogenously produced octanoic acid from octanoyl-acyl-carrier-protein onto the lipoyl domains of lipoate-dependent enzymes. Lipoyl-ACP can also act as a substrate although octanoyl-ACP is likely to be the physiological substrate. The chain is Octanoyltransferase from Wolbachia sp. subsp. Brugia malayi (strain TRS).